The sequence spans 154 residues: Endoribonuclease YbeY (154 aa).

Zn(2+) is bound by residues histidine 113, histidine 117, and histidine 123.

It belongs to the endoribonuclease YbeY family. Zn(2+) is required as a cofactor.

Its subcellular location is the cytoplasm. In terms of biological role, single strand-specific metallo-endoribonuclease involved in late-stage 70S ribosome quality control and in maturation of the 3' terminus of the 16S rRNA. The protein is Endoribonuclease YbeY of Ehrlichia canis (strain Jake).